Consider the following 154-residue polypeptide: 17 kDa surface antigen (154 aa).

A signal peptide spans 1 to 19; that stretch reads MKLLSKIMIIALAASTLQA. The N-palmitoyl cysteine moiety is linked to residue Cys20. The S-diacylglycerol cysteine moiety is linked to residue Cys20.

This sequence belongs to the rickettsiale 17 kDa surface antigen family.

It is found in the cell outer membrane. The chain is 17 kDa surface antigen (omp) from Rickettsia amblyommatis (Rickettsia amblyommii).